The primary structure comprises 301 residues: MKIGILSRKRELYSTNSLVEACNARGHEVRVINPLRCYMNITSHNPSILYKGEKLEGFDAIIPRIGASITFYGCAVVRQFEMMGVYCVNESVAITRSRDKLRSLQLLARKGIGLPVTAFAHSTQYTEDLIDIVGGAPLVIKLLEGTQGKGVVLAETRNTAASIIEAFKGLEANILVQEFISEASGSDIRCLVVGGKVIASMKRQGREGDFRSNLHQGGSATQVRITPEERSTAVRSAKIMGLGFCGVDILRSNHGPVVMEVNSSPGLEGIEKTTDIDVAGQLIDYIEKNAQPGKTKTKGKG.

The ATP-grasp domain occupies 104–287 (LQLLARKGIG…VAGQLIDYIE (184 aa)). ATP is bound by residues K141, 178–179 (EF), D187, and 211–213 (RSN). Residues D248, E260, and N262 each contribute to the Mg(2+) site. Mn(2+) is bound by residues D248, E260, and N262.

It belongs to the RimK family. Mg(2+) is required as a cofactor. The cofactor is Mn(2+).

In Maridesulfovibrio salexigens (strain ATCC 14822 / DSM 2638 / NCIMB 8403 / VKM B-1763) (Desulfovibrio salexigens), this protein is Probable alpha-L-glutamate ligase.